Here is a 434-residue protein sequence, read N- to C-terminus: Zinc finger protein kipf (434 aa).

Residues asparagine 7–valine 88 form the ZAD domain. Zn(2+) contacts are provided by cysteine 9, cysteine 12, cysteine 61, and cysteine 64. Residues glutamine 117–glutamate 173 are disordered. A C2H2-type 1; degenerate zinc finger spans residues tyrosine 197–leucine 219. 3 consecutive C2H2-type zinc fingers follow at residues asparagine 221–histidine 243, histidine 249–histidine 271, and leucine 277–histidine 299. The tract at residues histidine 295–lysine 328 is disordered. Residues serine 316 and serine 319 each carry the phosphoserine modification. 3 consecutive C2H2-type zinc fingers follow at residues proline 348–histidine 370, lysine 377–histidine 399, and phenylalanine 404–histidine 427.

In terms of assembly, homodimer; mediated by the ZAD domain. Interacts (via C2H2 type zinc finger 4) with rhi/rhino (via Chromo domain). Dimerization is required for association with DNA and interaction with rhi/rhino. Primarily expressed in ovaries and absent from testes. In ovaries very low levels in germline stem cells and cystoblasts but abundant in developing cysts and polyploid nurse cells.

It is found in the nucleus. The protein resides in the chromosome. DNA-binding zinc finger protein that recruits chromo domain protein rhino/rhi to specific chromatin regions enriched in H3K9me2/3 histone methylation, mediating piRNA (piwi-interacting RNA) biogenesis. May bind to GC rich DNA sequences including a 5'-GRGGN-3' sequence motif. Nucleates rhi/rhino accumulation and stabilizes its expansion. Involved in piRNA transposon repression, particularly in the female ovary during oogenesis. This chain is Zinc finger protein kipf, found in Drosophila melanogaster (Fruit fly).